Here is a 425-residue protein sequence, read N- to C-terminus: Alpha/beta hydrolase xenA (425 aa).

The active site involves Asp-366.

It belongs to the AB hydrolase superfamily. FUS2 hydrolase family. Homodimer.

It participates in mycotoxin biosynthesis. Alpha/beta hydrolase; part of the gene cluster that mediates the biosynthesis of xenoacremones such as xenoacremone A, a compound that shows inhibitory activity toward the PI3K/AKT signaling pathway and which has the ability to induce apoptosis of A549 lung cancer cells. Within the pathway, cooperation of the hybrid PKS-NRPS xenE and the trans-acting enoyl reductase xenG is responsible for the formation of the reduced tyrosine-nonaketide derivative. The alpha/beta hydrolase xenA then accelerates intramolecular nucleophilic attack to give a pyrrolidone derivative. Subsequently, three enzymes, xenF, xenD, and xenC, coordinately participate in the conversion to xenoacremone B. XenF catalyzes sigmatropic rearrangement to form an A-ring, which leads to an unusual intermediate with a hexane ring, which is required for the formation of the tricarbocyclic product. Epoxidation catalyzed by xenD and the formation of the paracyclophane ether catalyzed by xenC initiate a spontaneous intramolecular Diels-Alder (IMDA) reaction to yield xenoacremone B. Spontaneous hydration of xenoacremone B leads to the formation of xenoacremone A, which undergoes subsequent methylation to afford xenoacremone C. The polypeptide is Alpha/beta hydrolase xenA (Xenoacremonium sinensis (Endophyte fungus)).